We begin with the raw amino-acid sequence, 394 residues long: NAD(P)H-quinone oxidoreductase subunit H (394 aa).

Belongs to the complex I 49 kDa subunit family. In terms of assembly, NDH-1 can be composed of about 15 different subunits; different subcomplexes with different compositions have been identified which probably have different functions.

Its subcellular location is the cellular thylakoid membrane. The catalysed reaction is a plastoquinone + NADH + (n+1) H(+)(in) = a plastoquinol + NAD(+) + n H(+)(out). The enzyme catalyses a plastoquinone + NADPH + (n+1) H(+)(in) = a plastoquinol + NADP(+) + n H(+)(out). In terms of biological role, NDH-1 shuttles electrons from an unknown electron donor, via FMN and iron-sulfur (Fe-S) centers, to quinones in the respiratory and/or the photosynthetic chain. The immediate electron acceptor for the enzyme in this species is believed to be plastoquinone. Couples the redox reaction to proton translocation, and thus conserves the redox energy in a proton gradient. Cyanobacterial NDH-1 also plays a role in inorganic carbon-concentration. This is NAD(P)H-quinone oxidoreductase subunit H from Prochlorococcus marinus (strain NATL1A).